The primary structure comprises 1001 residues: UPF0182 protein Mjls_1469 (1001 aa).

7 consecutive transmembrane segments (helical) span residues Val16 to Asp36, Val61 to Leu81, Leu112 to Tyr132, Phe174 to Ile194, Ile209 to Asp229, Lys258 to Leu278, and Ile286 to Val306. A compositionally biased stretch (low complexity) spans Ala900–Gly929. A disordered region spans residues Ala900 to Ser977.

Belongs to the UPF0182 family.

The protein localises to the cell membrane. The sequence is that of UPF0182 protein Mjls_1469 from Mycobacterium sp. (strain JLS).